Reading from the N-terminus, the 227-residue chain is NADH-quinone oxidoreductase subunit C (227 aa).

The protein belongs to the complex I 30 kDa subunit family. NDH-1 is composed of 14 different subunits. Subunits NuoB, C, D, E, F, and G constitute the peripheral sector of the complex.

It is found in the cell inner membrane. It carries out the reaction a quinone + NADH + 5 H(+)(in) = a quinol + NAD(+) + 4 H(+)(out). Its function is as follows. NDH-1 shuttles electrons from NADH, via FMN and iron-sulfur (Fe-S) centers, to quinones in the respiratory chain. The immediate electron acceptor for the enzyme in this species is believed to be ubiquinone. Couples the redox reaction to proton translocation (for every two electrons transferred, four hydrogen ions are translocated across the cytoplasmic membrane), and thus conserves the redox energy in a proton gradient. The sequence is that of NADH-quinone oxidoreductase subunit C from Legionella pneumophila (strain Corby).